We begin with the raw amino-acid sequence, 141 residues long: Large ribosomal subunit protein uL11 (141 aa).

Belongs to the universal ribosomal protein uL11 family. As to quaternary structure, part of the ribosomal stalk of the 50S ribosomal subunit. Interacts with L10 and the large rRNA to form the base of the stalk. L10 forms an elongated spine to which L12 dimers bind in a sequential fashion forming a multimeric L10(L12)X complex. Post-translationally, one or more lysine residues are methylated.

Functionally, forms part of the ribosomal stalk which helps the ribosome interact with GTP-bound translation factors. The sequence is that of Large ribosomal subunit protein uL11 from Geobacillus sp. (strain WCH70).